We begin with the raw amino-acid sequence, 236 residues long: Biosynthetic peptidoglycan transglycosylase (236 aa).

The helical transmembrane segment at 20-40 threads the bilayer; it reads GLVVAAVLALIPTMLTFLYLP.

The protein belongs to the glycosyltransferase 51 family.

The protein localises to the cell inner membrane. The enzyme catalyses [GlcNAc-(1-&gt;4)-Mur2Ac(oyl-L-Ala-gamma-D-Glu-L-Lys-D-Ala-D-Ala)](n)-di-trans,octa-cis-undecaprenyl diphosphate + beta-D-GlcNAc-(1-&gt;4)-Mur2Ac(oyl-L-Ala-gamma-D-Glu-L-Lys-D-Ala-D-Ala)-di-trans,octa-cis-undecaprenyl diphosphate = [GlcNAc-(1-&gt;4)-Mur2Ac(oyl-L-Ala-gamma-D-Glu-L-Lys-D-Ala-D-Ala)](n+1)-di-trans,octa-cis-undecaprenyl diphosphate + di-trans,octa-cis-undecaprenyl diphosphate + H(+). Its pathway is cell wall biogenesis; peptidoglycan biosynthesis. Its function is as follows. Peptidoglycan polymerase that catalyzes glycan chain elongation from lipid-linked precursors. This Mesorhizobium japonicum (strain LMG 29417 / CECT 9101 / MAFF 303099) (Mesorhizobium loti (strain MAFF 303099)) protein is Biosynthetic peptidoglycan transglycosylase.